We begin with the raw amino-acid sequence, 431 residues long: tRNA (adenine(37)-N6)-methyltransferase (431 aa).

Residues 30-168 (TEPIGYLESC…YIADYDSPQN (139 aa)) enclose the TsaA-like domain. S-adenosyl-L-methionine contacts are provided by residues 47 to 49 (PRQ), 90 to 91 (HK), Arg-117, Leu-127, and 148 to 151 (IDGT). Residues 196–242 (LSGRGKVQPRQSTKERPKCLEDRTSGENSQKSRDMSEIQHTLPEDRE) form a disordered region. Over residues 207–242 (STKERPKCLEDRTSGENSQKSRDMSEIQHTLPEDRE) the composition is skewed to basic and acidic residues.

This sequence belongs to the tRNA methyltransferase O family.

The catalysed reaction is N(6)-L-threonylcarbamoyladenosine(37) in tRNA + S-adenosyl-L-methionine = N(6)-methyl,N(6)-L-threonylcarbamoyladenosine(37) in tRNA + S-adenosyl-L-homocysteine + H(+). Functionally, S-adenosyl-L-methionine-dependent methyltransferase responsible for the addition of the methyl group in the formation of N6-methyl-N6-threonylcarbamoyladenosine at position 37 (m(6)t(6)A37) of the tRNA anticodon loop of tRNA(Ser)(GCU). The methyl group of m(6)t(6)A37 may improve the efficiency of the tRNA decoding ability. May bind to tRNA. This Mus musculus (Mouse) protein is tRNA (adenine(37)-N6)-methyltransferase.